We begin with the raw amino-acid sequence, 203 residues long: LexA repressor (203 aa).

The H-T-H motif DNA-binding region spans 30–50 (VREICQAVSLKSTSTVHGHLK). Residues Ser127 and Lys164 each act as for autocatalytic cleavage activity in the active site.

Belongs to the peptidase S24 family. As to quaternary structure, homodimer.

The enzyme catalyses Hydrolysis of Ala-|-Gly bond in repressor LexA.. In terms of biological role, represses a number of genes involved in the response to DNA damage (SOS response), including recA and lexA. In the presence of single-stranded DNA, RecA interacts with LexA causing an autocatalytic cleavage which disrupts the DNA-binding part of LexA, leading to derepression of the SOS regulon and eventually DNA repair. The sequence is that of LexA repressor from Clostridium perfringens (strain 13 / Type A).